Consider the following 417-residue polypeptide: Sulfate adenylyltransferase (417 aa).

The protein belongs to the sulfate adenylyltransferase family.

The enzyme catalyses sulfate + ATP + H(+) = adenosine 5'-phosphosulfate + diphosphate. Its pathway is sulfur metabolism; hydrogen sulfide biosynthesis; sulfite from sulfate: step 1/3. In Psychrobacter cryohalolentis (strain ATCC BAA-1226 / DSM 17306 / VKM B-2378 / K5), this protein is Sulfate adenylyltransferase.